The following is a 200-amino-acid chain: Glycerol-3-phosphate acyltransferase (200 aa).

Transmembrane regions (helical) follow at residues 2–22, 51–71, 84–104, 113–133, and 143–163; these read IHLL…AVIV, TAAI…VVAA, IVLL…FFGF, ALGI…ATWV, and SLSA…LLGW.

This sequence belongs to the PlsY family. As to quaternary structure, probably interacts with PlsX.

The protein resides in the cell inner membrane. It carries out the reaction an acyl phosphate + sn-glycerol 3-phosphate = a 1-acyl-sn-glycero-3-phosphate + phosphate. It participates in lipid metabolism; phospholipid metabolism. In terms of biological role, catalyzes the transfer of an acyl group from acyl-phosphate (acyl-PO(4)) to glycerol-3-phosphate (G3P) to form lysophosphatidic acid (LPA). This enzyme utilizes acyl-phosphate as fatty acyl donor, but not acyl-CoA or acyl-ACP. This is Glycerol-3-phosphate acyltransferase from Thiobacillus denitrificans (strain ATCC 25259 / T1).